The following is a 250-amino-acid chain: Triosephosphate isomerase (250 aa).

Positions 10 and 12 each coordinate substrate. Histidine 94 functions as the Electrophile in the catalytic mechanism. The active-site Proton acceptor is the glutamate 167.

This sequence belongs to the triosephosphate isomerase family. Homodimer.

The protein localises to the cytoplasm. It catalyses the reaction D-glyceraldehyde 3-phosphate = dihydroxyacetone phosphate. It functions in the pathway carbohydrate biosynthesis; gluconeogenesis. Its pathway is carbohydrate degradation; glycolysis; D-glyceraldehyde 3-phosphate from glycerone phosphate: step 1/1. This is Triosephosphate isomerase from Taenia solium (Pork tapeworm).